We begin with the raw amino-acid sequence, 407 residues long: tRNA(Ile2) 2-agmatinylcytidine synthetase TiaS (407 aa).

It belongs to the TiaS family.

It localises to the cytoplasm. It carries out the reaction cytidine(34) in tRNA(Ile2) + agmatine + ATP + H2O = 2-agmatinylcytidine(34) in tRNA(Ile2) + AMP + 2 phosphate + 2 H(+). Its function is as follows. ATP-dependent agmatine transferase that catalyzes the formation of 2-agmatinylcytidine (agm2C) at the wobble position (C34) of tRNA(Ile2), converting the codon specificity from AUG to AUA. The sequence is that of tRNA(Ile2) 2-agmatinylcytidine synthetase TiaS from Caldivirga maquilingensis (strain ATCC 700844 / DSM 13496 / JCM 10307 / IC-167).